A 429-amino-acid chain; its full sequence is Alpha-L-rhamnosidase rgxB (429 aa).

The first 20 residues, 1–20 (MAPIALKILLFTSLIVPSIS), serve as a signal peptide directing secretion. Asparagine 67, asparagine 77, asparagine 97, asparagine 103, asparagine 112, asparagine 135, and asparagine 219 each carry an N-linked (GlcNAc...) asparagine glycan. The PbH1 1 repeat unit spans residues 217–238 (SKNITLTNWEVVNGDDSISTKA). Aspartate 231 (proton donor) is an active-site residue. Asparagine 239, asparagine 247, asparagine 278, and asparagine 344 each carry an N-linked (GlcNAc...) asparagine glycan. PbH1 repeat units lie at residues 240–260 (STDITIANCTFTSGLGIAIGS) and 271–292 (VERLKISNITYEKTTHAVYFKT). Residues cysteine 374 and cysteine 380 are joined by a disulfide bond. Residues asparagine 387, asparagine 395, and asparagine 414 are each glycosylated (N-linked (GlcNAc...) asparagine).

Belongs to the glycosyl hydrolase 28 family.

The protein resides in the secreted. The enzyme catalyses Hydrolysis of terminal non-reducing alpha-L-rhamnose residues in alpha-L-rhamnosides.. Alpha-L-rhamnosidase which is able to degrade p-nitrophenyl-alpha-L-rhamnopyranoside (pnp_Rha). The natural substrate of this enzyme has not been identified yet. The protein is Alpha-L-rhamnosidase rgxB (rgxB) of Aspergillus niger (strain ATCC MYA-4892 / CBS 513.88 / FGSC A1513).